Consider the following 176-residue polypeptide: Pituitary adenylate cyclase-activating polypeptide (176 aa).

The signal sequence occupies residues 1-24 (MTMCSGARLALLVYGILMHSSVYG). A propeptide spanning residues 25–80 (SPAASGLRFPGIRPENEAYDEDGNPQQDFYDSEPPGVGSPASALRDAYALYYPAEE) is cleaved from the precursor. Disordered stretches follow at residues 36–62 (IRPENEAYDEDGNPQQDFYDSEPPGVG) and 115–134 (GTPGGGADDDSEPLSKRHSD). The tract at residues 150–158 (VKKYLAAVL) is important for receptor binding. Position 158 is a leucine amide (Leu158). Lysine amide is present on Lys169. Positions 173 to 176 (IPYL) are excised as a propeptide.

It belongs to the glucagon family.

Its subcellular location is the secreted. In terms of biological role, PACAP is a neuropeptide involved in diverse array of physiological processes through activating the PACAP subfamily of class B1 G protein-coupled receptors: VIP receptor 1 (VIPR1), VIP receptor 2 (VIPR2), and PACAP type I receptor (ADCYAP1R1). Exerts neuroprotective and general cytoprotective effects due to anti-apoptotic, anti-inflammatory, and antioxidant actions. Promotes neuron projection development through the RAPGEF2/Rap1/B-Raf/ERK pathway. In chromaffin cells, induces long-lasting increase of intracellular calcium concentrations and neuroendocrine secretion. Involved in the control of glucose homeostasis, induces insulin secretion by pancreatic beta cells. PACAP exists in two bioactive forms from proteolysis of the same precursor protein, PACAP27 and PACAP38, which differ by eleven amino acid residues in the C-terminus. This is Pituitary adenylate cyclase-activating polypeptide (ADCYAP1) from Ovis aries (Sheep).